Consider the following 123-residue polypeptide: Small ribosomal subunit protein uS13 (123 aa).

The interval 95-123 is disordered; the sequence is GLPVRGQRTKTNARTRKGPARTVAGKKKK.

It belongs to the universal ribosomal protein uS13 family. As to quaternary structure, part of the 30S ribosomal subunit. Forms a loose heterodimer with protein S19. Forms two bridges to the 50S subunit in the 70S ribosome.

In terms of biological role, located at the top of the head of the 30S subunit, it contacts several helices of the 16S rRNA. In the 70S ribosome it contacts the 23S rRNA (bridge B1a) and protein L5 of the 50S subunit (bridge B1b), connecting the 2 subunits; these bridges are implicated in subunit movement. Contacts the tRNAs in the A and P-sites. The polypeptide is Small ribosomal subunit protein uS13 (Heliobacterium modesticaldum (strain ATCC 51547 / Ice1)).